A 624-amino-acid polypeptide reads, in one-letter code: Chaperone protein HtpG (624 aa).

The a; substrate-binding stretch occupies residues 1–336; sequence MKGQETRGFQ…SNDLPLNVSR (336 aa). The segment at 337–552 is b; the sequence is EILQDSTVTR…ADEMSTQMAK (216 aa). The tract at residues 553 to 624 is c; sequence LFAAAGQSVP…IRRMNQLLVS (72 aa).

This sequence belongs to the heat shock protein 90 family. Homodimer.

The protein localises to the cytoplasm. Molecular chaperone. Has ATPase activity. This chain is Chaperone protein HtpG, found in Salmonella typhi.